Here is a 322-residue protein sequence, read N- to C-terminus: Phosphatidylserine decarboxylase proenzyme (322 aa).

Active-site charge relay system; for autoendoproteolytic cleavage activity residues include D90, H147, and S254. S254 serves as the catalytic Schiff-base intermediate with substrate; via pyruvic acid; for decarboxylase activity. At S254 the chain carries Pyruvic acid (Ser); by autocatalysis. The disordered stretch occupies residues 294-322; sequence EVEPAPLPADEIKAEHDASPLVDNKKDDT. Basic and acidic residues predominate over residues 303-322; the sequence is DEIKAEHDASPLVDNKKDDT.

This sequence belongs to the phosphatidylserine decarboxylase family. PSD-B subfamily. Prokaryotic type I sub-subfamily. As to quaternary structure, heterodimer of a large membrane-associated beta subunit and a small pyruvoyl-containing alpha subunit. Pyruvate is required as a cofactor. Post-translationally, is synthesized initially as an inactive proenzyme. Formation of the active enzyme involves a self-maturation process in which the active site pyruvoyl group is generated from an internal serine residue via an autocatalytic post-translational modification. Two non-identical subunits are generated from the proenzyme in this reaction, and the pyruvate is formed at the N-terminus of the alpha chain, which is derived from the carboxyl end of the proenzyme. The autoendoproteolytic cleavage occurs by a canonical serine protease mechanism, in which the side chain hydroxyl group of the serine supplies its oxygen atom to form the C-terminus of the beta chain, while the remainder of the serine residue undergoes an oxidative deamination to produce ammonia and the pyruvoyl prosthetic group on the alpha chain. During this reaction, the Ser that is part of the protease active site of the proenzyme becomes the pyruvoyl prosthetic group, which constitutes an essential element of the active site of the mature decarboxylase.

Its subcellular location is the cell membrane. It catalyses the reaction a 1,2-diacyl-sn-glycero-3-phospho-L-serine + H(+) = a 1,2-diacyl-sn-glycero-3-phosphoethanolamine + CO2. It functions in the pathway phospholipid metabolism; phosphatidylethanolamine biosynthesis; phosphatidylethanolamine from CDP-diacylglycerol: step 2/2. Its function is as follows. Catalyzes the formation of phosphatidylethanolamine (PtdEtn) from phosphatidylserine (PtdSer). The polypeptide is Phosphatidylserine decarboxylase proenzyme (Salmonella paratyphi C (strain RKS4594)).